Here is a 161-residue protein sequence, read N- to C-terminus: S-ribosylhomocysteine lyase (161 aa).

His-53, His-57, and Cys-124 together coordinate Fe cation.

Belongs to the LuxS family. In terms of assembly, homodimer. Fe cation serves as cofactor.

The catalysed reaction is S-(5-deoxy-D-ribos-5-yl)-L-homocysteine = (S)-4,5-dihydroxypentane-2,3-dione + L-homocysteine. Involved in the synthesis of autoinducer 2 (AI-2) which is secreted by bacteria and is used to communicate both the cell density and the metabolic potential of the environment. The regulation of gene expression in response to changes in cell density is called quorum sensing. Catalyzes the transformation of S-ribosylhomocysteine (RHC) to homocysteine (HC) and 4,5-dihydroxy-2,3-pentadione (DPD). The protein is S-ribosylhomocysteine lyase of Phocaeicola vulgatus (strain ATCC 8482 / DSM 1447 / JCM 5826 / CCUG 4940 / NBRC 14291 / NCTC 11154) (Bacteroides vulgatus).